The chain runs to 610 residues: Aspartate--tRNA(Asp/Asn) ligase (610 aa).

Residue Glu-182 coordinates L-aspartate. The tract at residues 206 to 209 (QLFK) is aspartate. An L-aspartate-binding site is contributed by Arg-228. Residues 228 to 230 (RDE) and Gln-237 each bind ATP. His-470 is a binding site for L-aspartate. Glu-506 is a binding site for ATP. Residue Arg-513 coordinates L-aspartate. 558–561 (GLDR) lines the ATP pocket.

The protein belongs to the class-II aminoacyl-tRNA synthetase family. Type 1 subfamily. In terms of assembly, homodimer.

It is found in the cytoplasm. It carries out the reaction tRNA(Asx) + L-aspartate + ATP = L-aspartyl-tRNA(Asx) + AMP + diphosphate. Aspartyl-tRNA synthetase with relaxed tRNA specificity since it is able to aspartylate not only its cognate tRNA(Asp) but also tRNA(Asn). Reaction proceeds in two steps: L-aspartate is first activated by ATP to form Asp-AMP and then transferred to the acceptor end of tRNA(Asp/Asn). This chain is Aspartate--tRNA(Asp/Asn) ligase, found in Acidobacterium capsulatum (strain ATCC 51196 / DSM 11244 / BCRC 80197 / JCM 7670 / NBRC 15755 / NCIMB 13165 / 161).